We begin with the raw amino-acid sequence, 236 residues long: Ubiquinone biosynthesis O-methyltransferase (236 aa).

4 residues coordinate S-adenosyl-L-methionine: Arg39, Gly59, Asp80, and Met124.

The protein belongs to the methyltransferase superfamily. UbiG/COQ3 family.

The enzyme catalyses a 3-demethylubiquinol + S-adenosyl-L-methionine = a ubiquinol + S-adenosyl-L-homocysteine + H(+). It catalyses the reaction a 3-(all-trans-polyprenyl)benzene-1,2-diol + S-adenosyl-L-methionine = a 2-methoxy-6-(all-trans-polyprenyl)phenol + S-adenosyl-L-homocysteine + H(+). The protein operates within cofactor biosynthesis; ubiquinone biosynthesis. In terms of biological role, O-methyltransferase that catalyzes the 2 O-methylation steps in the ubiquinone biosynthetic pathway. The protein is Ubiquinone biosynthesis O-methyltransferase of Shewanella oneidensis (strain ATCC 700550 / JCM 31522 / CIP 106686 / LMG 19005 / NCIMB 14063 / MR-1).